We begin with the raw amino-acid sequence, 245 residues long: 1-(5-phosphoribosyl)-5-[(5-phosphoribosylamino)methylideneamino] imidazole-4-carboxamide isomerase (245 aa).

Asp-11 acts as the Proton acceptor in catalysis. Asp-132 functions as the Proton donor in the catalytic mechanism.

This sequence belongs to the HisA/HisF family.

The protein resides in the cytoplasm. The catalysed reaction is 1-(5-phospho-beta-D-ribosyl)-5-[(5-phospho-beta-D-ribosylamino)methylideneamino]imidazole-4-carboxamide = 5-[(5-phospho-1-deoxy-D-ribulos-1-ylimino)methylamino]-1-(5-phospho-beta-D-ribosyl)imidazole-4-carboxamide. It participates in amino-acid biosynthesis; L-histidine biosynthesis; L-histidine from 5-phospho-alpha-D-ribose 1-diphosphate: step 4/9. This Bacillus velezensis (strain DSM 23117 / BGSC 10A6 / LMG 26770 / FZB42) (Bacillus amyloliquefaciens subsp. plantarum) protein is 1-(5-phosphoribosyl)-5-[(5-phosphoribosylamino)methylideneamino] imidazole-4-carboxamide isomerase.